A 213-amino-acid polypeptide reads, in one-letter code: Probable thiopurine S-methyltransferase (213 aa).

Tryptophan 10, leucine 45, glutamate 66, and arginine 125 together coordinate S-adenosyl-L-methionine.

Belongs to the class I-like SAM-binding methyltransferase superfamily. TPMT family.

It is found in the cytoplasm. It catalyses the reaction S-adenosyl-L-methionine + a thiopurine = S-adenosyl-L-homocysteine + a thiopurine S-methylether.. In Yarrowia lipolytica (strain CLIB 122 / E 150) (Yeast), this protein is Probable thiopurine S-methyltransferase.